The primary structure comprises 182 residues: ATP synthase subunit delta (182 aa).

The protein belongs to the ATPase delta chain family. In terms of assembly, F-type ATPases have 2 components, F(1) - the catalytic core - and F(0) - the membrane proton channel. F(1) has five subunits: alpha(3), beta(3), gamma(1), delta(1), epsilon(1). F(0) has three main subunits: a(1), b(2) and c(10-14). The alpha and beta chains form an alternating ring which encloses part of the gamma chain. F(1) is attached to F(0) by a central stalk formed by the gamma and epsilon chains, while a peripheral stalk is formed by the delta and b chains.

The protein resides in the cell membrane. With respect to regulation, increases 2-fold following exposure to low pH. In terms of biological role, f(1)F(0) ATP synthase produces ATP from ADP in the presence of a proton or sodium gradient. F-type ATPases consist of two structural domains, F(1) containing the extramembraneous catalytic core and F(0) containing the membrane proton channel, linked together by a central stalk and a peripheral stalk. During catalysis, ATP synthesis in the catalytic domain of F(1) is coupled via a rotary mechanism of the central stalk subunits to proton translocation. Functionally, this protein is part of the stalk that links CF(0) to CF(1). It either transmits conformational changes from CF(0) to CF(1) or is implicated in proton conduction. In Lactobacillus acidophilus (strain ATCC 700396 / NCK56 / N2 / NCFM), this protein is ATP synthase subunit delta.